The following is a 20-amino-acid chain: Chrysophsin-3 (20 aa).

A Histidine amide modification is found at His20.

Gill.

It localises to the secreted. Has antibacterial activity against Gram-positive bacteria B.subtilis ATCC 6633, L.garvieae ATCC 49156 and S.iniae F-8502, and Gram-negative bacteria E.coli WT-2, V.anguillarum ATCC 19264, V.penaeicida KHA, V.harveyi ATCC 14126, V.vulnificus ATCC 33148, A.salmonicida NCMB 1102 and P.putida ATCC 12633. Has hemolytic activity against human red blood cells. Seems to disrupt the membranes by adopting an alpha helical conformation. May play a significant role in innate host defense. The polypeptide is Chrysophsin-3 (Pagrus major (Red sea bream)).